The primary structure comprises 428 residues: Adenylosuccinate synthetase (428 aa).

GTP contacts are provided by residues 12 to 18 (GDEGKGK) and 40 to 42 (GHT). Asp13 functions as the Proton acceptor in the catalytic mechanism. Mg(2+) is bound by residues Asp13 and Gly40. Residues 13–16 (DEGK), 38–41 (NAGH), Thr129, Arg143, Gln224, Thr239, and Arg303 each bind IMP. Catalysis depends on His41, which acts as the Proton donor. 299-305 (VTTGRSR) is a binding site for substrate. GTP contacts are provided by residues Arg305, 331-333 (KLD), and 413-415 (GVG).

The protein belongs to the adenylosuccinate synthetase family. Homodimer. Mg(2+) serves as cofactor.

Its subcellular location is the cytoplasm. It carries out the reaction IMP + L-aspartate + GTP = N(6)-(1,2-dicarboxyethyl)-AMP + GDP + phosphate + 2 H(+). Its pathway is purine metabolism; AMP biosynthesis via de novo pathway; AMP from IMP: step 1/2. In terms of biological role, plays an important role in the de novo pathway of purine nucleotide biosynthesis. Catalyzes the first committed step in the biosynthesis of AMP from IMP. This Saccharopolyspora erythraea (strain ATCC 11635 / DSM 40517 / JCM 4748 / NBRC 13426 / NCIMB 8594 / NRRL 2338) protein is Adenylosuccinate synthetase.